Here is a 187-residue protein sequence, read N- to C-terminus: MGNKQTIFTEEQLDNYQDCTFFNKKDILKLHARFYELAPNLVPMDYRKSPIVHVPMSLIIQMPELRENPFKERIVEAFSEDGEGNLTFNDFVDMFSVLCESAPRELKANYAFKIYDFNTDNFICKEDLEMTLARLTKSELEEDEVVLVCDKVIEEADLDGDGKLGFADFEDMIAKAPDFLSTFHIRI.

3 consecutive EF-hand domains span residues 66–101 (RENP…LCES), 103–138 (PREL…LTKS), and 144–179 (EVVL…APDF). Positions 116, 118, 120, 127, 157, 159, 161, 163, and 168 each coordinate Ca(2+).

Monomer. Homodimer. Interacts with WHRN and MYO7A. Interacts with ITGA2B (via C-terminus cytoplasmic tail region); this interaction is stabilized/increased in a calcium and magnesium-dependent manner. Interacts with ITGA7 (via C-terminus cytoplasmic tail region); this interaction is stabilized/increased in a calcium and magnesium-dependent manner. Interacts with TMC1. Interacts with TMC2. Interacts with PIEZO1. Expressed in inner and outer segments of photoreceptor cells, as well as in the pigmented epithelium. Also observed in the inner and outer plexiform layers and in the ganglion cell layer (at protein level). Expressed in sensory hair cell stereocilia, with expression mainly at the basal body of the kinocilium and in the hair bundle stereocilia; and the apical surface of hair cells (at protein level). Located in the tip region of the stereocilia and at the apical surface of hair cells around the cuticular plate (at protein level). Not expressed in the hair bundles of the vestibular hair cells. Strongly expressed in skeletal muscles, brain, kidney and liver. Expressed in the skeletal muscle, retina and cochlea. Expressed in megakaryocytes and endothelial cells. Expressed in heart, spleen, lung, and inner ear. In the inner ear, expressed in the vestibule, basilar membrane and spiral ganglion cells. Expressed in the supporting cells in both the organ of Corti and the vestibular sensory epithelia.

It localises to the cytoplasm. Its subcellular location is the cell projection. The protein localises to the stereocilium. The protein resides in the photoreceptor inner segment. It is found in the cilium. It localises to the photoreceptor outer segment. Its subcellular location is the cell membrane. The protein localises to the sarcolemma. Calcium- and integrin-binding protein that plays a role in intracellular calcium homeostasis. Acts as an auxiliary subunit of the sensory mechanoelectrical transduction (MET) channel in hair cells. Essential for mechanoelectrical transduction (MET) currents in auditory hair cells and thereby required for hearing. Regulates the function of hair cell mechanotransduction by controlling the distribution of transmembrane channel-like proteins TMC1 and TMC2, and by regulating the function of the MET channels in hair cells. Required for the maintenance of auditory hair cell stereocilia bundle morphology and function and for hair-cell survival in the cochlea. Critical for proper photoreceptor cell maintenance and function. Plays a role in intracellular calcium homeostasis by decreasing ATP-induced calcium release. Seems to be dispensable for vestibular functions. In Mus musculus (Mouse), this protein is Calcium and integrin-binding family member 2 (Cib2).